Here is an 887-residue protein sequence, read N- to C-terminus: Autotaxin (887 aa).

The N-terminal stretch at 1 to 27 is a signal peptide; sequence MARQGCLGSFQVISLFTFAISVNICLG. Residues 28 to 35 constitute a propeptide, removed by furin; it reads FTASRIKR. The N-linked (GlcNAc...) asparagine glycan is linked to Asn-53. SMB domains are found at residues 54 to 97 and 98 to 142; these read TSGS…LKTA and RGWE…GESH. 10 cysteine pairs are disulfide-bonded: Cys-58-Cys-75, Cys-62-Cys-93, Cys-73-Cys-86, Cys-79-Cys-85, Cys-102-Cys-119, Cys-107-Cys-137, Cys-117-Cys-130, Cys-123-Cys-129, Cys-148-Cys-194, and Cys-156-Cys-350. Residues 126–128 carry the Cell attachment site motif; that stretch reads RGD. The interval 144–501 is phosphodiesterase; the sequence is VDDDCEEIKV…PTFKYRTKVP (358 aa). Zn(2+) is bound by residues Asp-171 and Thr-209. Catalysis depends on Thr-209, which acts as the Nucleophile. Residues Thr-209, Asn-230, and Asp-311 each contribute to the 1-(9Z-octadecenoyl)-sn-glycero-3-phosphate site. 1-hexadecanoyl-sn-glycero-3-phosphate contacts are provided by Thr-209, Asn-230, and Asp-311. 1-tetradecanoyl-sn-glycerol 3-phosphate contacts are provided by Thr-209, Asn-230, and Asp-311. Zn(2+)-binding residues include Asp-311, His-315, Asp-358, and His-359. 5 cysteine pairs are disulfide-bonded: Cys-366-Cys-468, Cys-413-Cys-830, Cys-566-Cys-691, Cys-568-Cys-676, and Cys-799-Cys-809. 2 N-linked (GlcNAc...) asparagine glycosylation sites follow: Asn-398 and Asn-410. His-474 provides a ligand contact to Zn(2+). His-474 lines the 1-(9Z-octadecenoyl)-sn-glycero-3-phosphate pocket. His-474 is a 1-hexadecanoyl-sn-glycero-3-phosphate binding site. His-474 lines the 1-tetradecanoyl-sn-glycerol 3-phosphate pocket. Asn-524 carries an N-linked (GlcNAc...) asparagine glycan. Residues 586 to 607 are compositionally biased toward basic and acidic residues; it reads HTKGSTEAETGKFRGSKHENKK. The disordered stretch occupies residues 586–615; it reads HTKGSTEAETGKFRGSKHENKKNLNGSVEP. The N-linked (GlcNAc...) asparagine glycan is linked to Asn-610. The interval 622–887 is nuclease-like domain; it reads LYGRPAVLYR…TYLHTYESEI (266 aa). Residues Asp-764, Asn-766, Asp-768, Leu-770, and Asp-772 each coordinate Ca(2+). N-linked (GlcNAc...) asparagine glycosylation is present at Asn-831. The segment at 854-875 is required for secretion; sequence IEHLTGLDFYRKTSRSYSEILT.

This sequence belongs to the nucleotide pyrophosphatase/phosphodiesterase family. The cofactor is Zn(2+). Requires Ca(2+) as cofactor. In terms of processing, N-glycosylation, but not furin-cleavage, plays a critical role on secretion and on lysoPLD activity. The interdomain disulfide bond between Cys-413 and Cys-830 is essential for catalytic activity. In terms of tissue distribution, abundantly expressed in cerebrum and cerebellum. Localized in secretory epithelial cells in the brain and the eye including choroid plexus epithelial cells, ciliary epithelial cells, iris pigment epithelial cells, and retinal pigment cells.

It is found in the secreted. The catalysed reaction is a 1-O-alkyl-sn-glycero-3-phosphoethanolamine + H2O = a 1-O-alkyl-sn-glycero-3-phosphate + ethanolamine + H(+). It catalyses the reaction a 1-acyl-sn-glycero-3-phosphoethanolamine + H2O = a 1-acyl-sn-glycero-3-phosphate + ethanolamine + H(+). The enzyme catalyses 1-(9Z-octadecenoyl)-sn-glycero-3-phosphoethanolamine + H2O = 1-(9Z-octadecenoyl)-sn-glycero-3-phosphate + ethanolamine + H(+). It carries out the reaction a 1-O-alkyl-sn-glycero-3-phosphocholine + H2O = a 1-O-alkyl-sn-glycero-3-phosphate + choline + H(+). The catalysed reaction is 1-O-(9Z-octadecenyl)-sn-glycero-3-phosphocholine + H2O = 1-O-(9Z-octadecenyl)-sn-glycero-3-phosphate + choline + H(+). It catalyses the reaction 1-O-hexadecyl-sn-glycero-3-phosphocholine + H2O = 1-O-hexadecyl-sn-glycero-3-phosphate + choline + H(+). The enzyme catalyses a 1-O-(1Z-alkenyl)-sn-glycero-3-phosphocholine + H2O = a 1-O-(1Z-alkenyl)-sn-glycero-3-phosphate + choline + H(+). It carries out the reaction a 1-acyl-sn-glycero-3-phosphocholine + H2O = a 1-acyl-sn-glycero-3-phosphate + choline + H(+). The catalysed reaction is 1-dodecanoyl-sn-glycero-3-phosphocholine + H2O = 1-dodecanoyl-sn-glycerol 3-phosphate + choline + H(+). It catalyses the reaction 1-(9Z-octadecenoyl)-sn-glycero-3-phosphocholine + H2O = 1-(9Z-octadecenoyl)-sn-glycero-3-phosphate + choline + H(+). The enzyme catalyses 1-tetradecanoyl-sn-glycero-3-phosphocholine + H2O = 1-tetradecanoyl-sn-glycerol 3-phosphate + choline + H(+). It carries out the reaction 1-decanoyl-sn-glycero-3-phosphocholine + H2O = 1-decanoyl-sn-glycero-3-phosphate + choline + H(+). The catalysed reaction is 1-octadecanoyl-sn-glycero-3-phosphocholine + H2O = 1-octadecanoyl-sn-glycero-3-phosphate + choline + H(+). It catalyses the reaction 1-hexadecanoyl-sn-glycero-3-phosphocholine + H2O = 1-hexadecanoyl-sn-glycero-3-phosphate + choline + H(+). The enzyme catalyses 1-hexanoyl-sn-glycero-3-phosphocholine + H2O = 1-hexanoyl-sn-glycero-3-phosphate + choline + H(+). It carries out the reaction 1-(9Z,12Z)-octadecadienoyl-sn-glycero-3-phosphocholine + H2O = 1-(9Z,12Z)-octadecadienoyl-sn-glycero-3-phosphate + choline + H(+). The catalysed reaction is sphing-4-enine-phosphocholine + H2O = sphing-4-enine 1-phosphate + choline + H(+). It catalyses the reaction 1-(5Z,8Z,11Z,14Z-eicosatetraenoyl)-sn-glycero-3-phosphocholine + H2O = 1-(5Z,8Z,11Z,14Z-eicosatetraenoyl)-sn-glycero-3-phosphate + choline + H(+). The enzyme catalyses a 2-acyl-sn-glycero-3-phosphocholine + H2O = a 2-acyl-sn-glycerol 3-phosphate + choline + H(+). It carries out the reaction a 1,2-diacyl-sn-glycero-3-phosphocholine + H2O = a 1,2-diacyl-sn-glycero-3-phosphate + choline + H(+). The catalysed reaction is 1,2-dioctanoyl-sn-glycero-3-phosphocholine + H2O = 1,2-dioctanoyl-sn-glycero-3-phosphate + choline + H(+). It catalyses the reaction 1,2-didecanoyl-sn-glycero-3-phosphocholine + H2O = 1,2-didecanoyl-sn-glycero-3-phosphate + choline + H(+). The enzyme catalyses a 1-acyl-sn-glycero-3-phospho-L-serine + H2O = a 1-acyl-sn-glycero-3-phosphate + L-serine + H(+). It carries out the reaction 1-(9Z-octadecenoyl)-sn-glycero-3-phospho-L-serine + H2O = 1-(9Z-octadecenoyl)-sn-glycero-3-phosphate + L-serine + H(+). The catalysed reaction is a 2-acyl-sn-glycero-3-phospho-L-serine + H2O = a 2-acyl-sn-glycerol 3-phosphate + L-serine + H(+). With respect to regulation, inhibited by vanadate. Inhibited by micromolar levels of bile salts, such as tauroursodeoxycholate. Not inhibited by taurodeoxycholate. Not inhibited by hydroxysterols, such as 7-hydroxycholesterol, testosterone, dexamethasone and prednisolone. Inhibited by EDTA and EGTA. Secreted lysophospholipase D that hydrolyzes lysophospholipids to produce the signaling molecule lysophosphatidic acid (LPA) in extracellular fluids. Its major substrate is lysophosphatidylcholine. Can also act on sphingosylphosphorylcholine producing sphingosine-1-phosphate, a modulator of cell motility. Can hydrolyze, in vitro, bis-pNPP, to some extent pNP-TMP, and barely ATP. Involved in several motility-related processes such as angiogenesis and neurite outgrowth. Acts as an angiogenic factor by stimulating migration of smooth muscle cells and microtubule formation. Stimulates migration of melanoma cells, probably via a pertussis toxin-sensitive G protein. May have a role in induction of parturition. Possible involvement in cell proliferation and adipose tissue development. Required for LPA production in activated platelets, cleaves the sn-1 lysophospholipids to generate sn-1 lysophosphatidic acids containing predominantly 18:2 and 20:4 fatty acids. Shows a preference for the sn-1 to the sn-2 isomer of 1-O-alkyl-sn-glycero-3-phosphocholine (lyso-PAF). This is Autotaxin from Rattus norvegicus (Rat).